A 217-amino-acid chain; its full sequence is Glycerol-3-phosphate acyltransferase (217 aa).

5 helical membrane passes run 1–21 (MAWA…SIPT), 54–74 (TAAI…VGGV), 84–104 (AIVP…AAIL), 126–146 (VLLV…LFML), and 165–185 (LLML…LAGI).

Belongs to the PlsY family. As to quaternary structure, probably interacts with PlsX.

The protein localises to the cell inner membrane. It catalyses the reaction an acyl phosphate + sn-glycerol 3-phosphate = a 1-acyl-sn-glycero-3-phosphate + phosphate. It participates in lipid metabolism; phospholipid metabolism. In terms of biological role, catalyzes the transfer of an acyl group from acyl-phosphate (acyl-PO(4)) to glycerol-3-phosphate (G3P) to form lysophosphatidic acid (LPA). This enzyme utilizes acyl-phosphate as fatty acyl donor, but not acyl-CoA or acyl-ACP. This is Glycerol-3-phosphate acyltransferase from Rippkaea orientalis (strain PCC 8801 / RF-1) (Cyanothece sp. (strain PCC 8801)).